A 296-amino-acid chain; its full sequence is Cell division protein DivIB (296 aa).

The Cytoplasmic segment spans residues 1-25 (MMEDKIIHTPRFDEQRRMRRKKRQR). A helical membrane pass occupies residues 26–46 (LQLFIFLSIVAIVSLILIYMF). The Extracellular portion of the chain corresponds to 47–296 (TSISYVKKIS…KELNQVKKNS (250 aa)). One can recognise a POTRA domain in the interval 50-118 (SYVKKISVND…NTVSINVEEY (69 aa)).

It belongs to the FtsQ/DivIB family. DivIB subfamily.

The protein resides in the cell membrane. In terms of biological role, cell division protein that may be involved in stabilizing or promoting the assembly of the division complex. This is Cell division protein DivIB from Macrococcus caseolyticus (strain JCSC5402) (Macrococcoides caseolyticum).